The chain runs to 360 residues: Photosystem II protein D1 3 (360 aa).

The next 3 membrane-spanning stretches (helical) occupy residues 29 to 46, 118 to 133, and 142 to 156; these read YVGW…AATI, HFLI…EWEL, and WICV…AATA. H118 serves as a coordination point for chlorophyll a. Pheophytin a is bound at residue Y126. [CaMn4O5] cluster contacts are provided by D170 and E189. Residues 197-218 form a helical membrane-spanning segment; sequence FHQLGVAGVFGGALFSAMHGSL. H198 provides a ligand contact to chlorophyll a. Residues H215 and 264–265 each bind a quinone; that span reads SF. H215 contacts Fe cation. H272 contacts Fe cation. A helical membrane pass occupies residues 274–288; that stretch reads FLAAWPVIGIWFTAL. Positions 332, 333, 342, and 344 each coordinate [CaMn4O5] cluster. The propeptide occupies 345 to 360; sequence SAESAPVAMIAPSING.

The protein belongs to the reaction center PufL/M/PsbA/D family. In terms of assembly, PSII is composed of 1 copy each of membrane proteins PsbA, PsbB, PsbC, PsbD, PsbE, PsbF, PsbH, PsbI, PsbJ, PsbK, PsbL, PsbM, PsbT, PsbX, PsbY, PsbZ, Psb30/Ycf12, peripheral proteins PsbO, CyanoQ (PsbQ), PsbU, PsbV and a large number of cofactors. It forms dimeric complexes. Precursor protein interacts with Ycf48. It depends on The D1/D2 heterodimer binds P680, chlorophylls that are the primary electron donor of PSII, and subsequent electron acceptors. It shares a non-heme iron and each subunit binds pheophytin, quinone, additional chlorophylls, carotenoids and lipids. D1 provides most of the ligands for the Mn4-Ca-O5 cluster of the oxygen-evolving complex (OEC). There is also a Cl(-1) ion associated with D1 and D2, which is required for oxygen evolution. The PSII complex binds additional chlorophylls, carotenoids and specific lipids. as a cofactor. C-terminally processed by CtpA; processing is essential to allow assembly of the oxygen-evolving complex and thus photosynthetic growth. Post-translationally, tyr-161 forms a radical intermediate that is referred to as redox-active TyrZ, YZ or Y-Z.

The protein localises to the cellular thylakoid membrane. It catalyses the reaction 2 a plastoquinone + 4 hnu + 2 H2O = 2 a plastoquinol + O2. In terms of biological role, photosystem II (PSII) is a light-driven water:plastoquinone oxidoreductase that uses light energy to abstract electrons from H(2)O, generating O(2) and a proton gradient subsequently used for ATP formation. It consists of a core antenna complex that captures photons, and an electron transfer chain that converts photonic excitation into a charge separation. The D1/D2 (PsbA/PsbD) reaction center heterodimer binds P680, the primary electron donor of PSII as well as several subsequent electron acceptors. The sequence is that of Photosystem II protein D1 3 from Thermosynechococcus vestitus (strain NIES-2133 / IAM M-273 / BP-1).